Here is a 139-residue protein sequence, read N- to C-terminus: D-ribose pyranase (139 aa).

H20 (proton donor) is an active-site residue. Residues D28, H106, and 128–130 each bind substrate; that span reads YAN.

The protein belongs to the RbsD / FucU family. RbsD subfamily. In terms of assembly, homodecamer.

The protein resides in the cytoplasm. It carries out the reaction beta-D-ribopyranose = beta-D-ribofuranose. It functions in the pathway carbohydrate metabolism; D-ribose degradation; D-ribose 5-phosphate from beta-D-ribopyranose: step 1/2. In terms of biological role, catalyzes the interconversion of beta-pyran and beta-furan forms of D-ribose. This is D-ribose pyranase from Vibrio campbellii (strain ATCC BAA-1116).